Here is a 44-residue protein sequence, read N- to C-terminus: Photosystem I reaction center subunit IX (44 aa).

Residues 7 to 27 (YLSTAPVLAISWLIFVAGLLI) traverse the membrane as a helical segment.

Belongs to the PsaJ family.

The protein resides in the plastid. It localises to the chloroplast thylakoid membrane. Its function is as follows. May help in the organization of the PsaE and PsaF subunits. In Larix decidua (European larch), this protein is Photosystem I reaction center subunit IX.